The primary structure comprises 292 residues: MFNRIFLFLLTNLAVLMLAGIVMSLLGVNPAQMSGLLVMAAIFGFGGSFISLLLSKFMAKRSTGAQVITEPRTPTERWLLETVRRHAQAAGIGMPEVAVYDGPEINAFATGANRNDALVAVSTGLLQNMDQDEAEAVLGHEIAHVANGDMVTMALLQGVLNTFVIVLARVVGGIIDSALSGNREGGRGFAYYIIVFALEMVFGLFATMIAMWFSRRREFRADAGGAQLAGRSKMIAALERLSLNHGQNTLPSQVQAFGISGGVGEGLRRLFLSHPPLTERIAALRAASGSAM.

2 consecutive transmembrane segments (helical) span residues 5–25 (IFLFLLTNLAVLMLAGIVMSL) and 34–54 (SGLLVMAAIFGFGGSFISLLL). Position 140 (H140) interacts with Zn(2+). E141 is a catalytic residue. A Zn(2+)-binding site is contributed by H144. 2 helical membrane-spanning segments follow: residues 155-175 (LLQGVLNTFVIVLARVVGGII) and 193-213 (IIVFALEMVFGLFATMIAMWF). E218 contributes to the Zn(2+) binding site.

It belongs to the peptidase M48B family. Zn(2+) serves as cofactor.

Its subcellular location is the cell inner membrane. The polypeptide is Protease HtpX (Xanthomonas euvesicatoria pv. vesicatoria (strain 85-10) (Xanthomonas campestris pv. vesicatoria)).